The primary structure comprises 514 residues: RNA-splicing ligase RtcB homolog (514 aa).

Mn(2+) contacts are provided by Asp-128, Cys-131, His-236, His-268, and His-362. 235–239 provides a ligand contact to GMP; the sequence is NHYAE. GMP-binding positions include 362 to 363, 411 to 414, Ser-418, 437 to 440, and Lys-513; these read HN, GGTM, and HGAG. The GMP-histidine intermediate role is filled by His-437.

It belongs to the RtcB family. As to quaternary structure, catalytic component of the tRNA-splicing ligase complex. The cofactor is Mn(2+).

The catalysed reaction is a 3'-end 3'-phospho-ribonucleotide-RNA + a 5'-end dephospho-ribonucleoside-RNA + GTP = a ribonucleotidyl-ribonucleotide-RNA + GMP + diphosphate. It carries out the reaction a 3'-end 2',3'-cyclophospho-ribonucleotide-RNA + a 5'-end dephospho-ribonucleoside-RNA + GTP + H2O = a ribonucleotidyl-ribonucleotide-RNA + GMP + diphosphate + H(+). Functionally, catalytic subunit of the tRNA-splicing ligase complex that acts by directly joining spliced tRNA halves to mature-sized tRNAs by incorporating the precursor-derived splice junction phosphate into the mature tRNA as a canonical 3',5'-phosphodiester. May act as an RNA ligase with broad substrate specificity, and may function toward other RNAs. In Ostreococcus lucimarinus (strain CCE9901), this protein is RNA-splicing ligase RtcB homolog.